A 111-amino-acid polypeptide reads, in one-letter code: Probable 4-amino-4-deoxy-L-arabinose-phosphoundecaprenol flippase subunit ArnE (111 aa).

The Cytoplasmic segment spans residues 1–35 (MIWLTLVFASLLSVAGQLCQKQATCFATVNKRRKH). Residues 36–56 (IVLWLGLALACLGLAMVLWLL) traverse the membrane as a helical segment. Positions 40–109 (LGLALACLGL…IIGGIVILGS (70 aa)) constitute an EamA domain. The Periplasmic portion of the chain corresponds to 57-60 (VLQN). A helical transmembrane segment spans residues 61-81 (VPVGIAYPMLSLNFVWVTLAA). Residues 82 to 87 (VKLWHE) lie on the Cytoplasmic side of the membrane. Residues 88–108 (PVSLRHWCGVAFIIGGIVILG) form a helical membrane-spanning segment. Over 109 to 111 (STV) the chain is Periplasmic.

The protein belongs to the ArnE family. In terms of assembly, heterodimer of ArnE and ArnF.

The protein resides in the cell inner membrane. It functions in the pathway bacterial outer membrane biogenesis; lipopolysaccharide biosynthesis. In terms of biological role, translocates 4-amino-4-deoxy-L-arabinose-phosphoundecaprenol (alpha-L-Ara4N-phosphoundecaprenol) from the cytoplasmic to the periplasmic side of the inner membrane. The sequence is that of Probable 4-amino-4-deoxy-L-arabinose-phosphoundecaprenol flippase subunit ArnE from Escherichia coli O6:H1 (strain CFT073 / ATCC 700928 / UPEC).